The following is a 430-amino-acid chain: 3-phosphoshikimate 1-carboxyvinyltransferase (430 aa).

Positions 20, 21, and 25 each coordinate 3-phosphoshikimate. Residue K20 participates in phosphoenolpyruvate binding. Residues G90 and R118 each coordinate phosphoenolpyruvate. 6 residues coordinate 3-phosphoshikimate: S163, S164, Q165, S191, D311, and K338. Q165 contributes to the phosphoenolpyruvate binding site. Catalysis depends on D311, which acts as the Proton acceptor. Phosphoenolpyruvate contacts are provided by R342 and R383.

The protein belongs to the EPSP synthase family. Monomer.

Its subcellular location is the cytoplasm. It carries out the reaction 3-phosphoshikimate + phosphoenolpyruvate = 5-O-(1-carboxyvinyl)-3-phosphoshikimate + phosphate. It functions in the pathway metabolic intermediate biosynthesis; chorismate biosynthesis. Functionally, catalyzes the transfer of the enolpyruvyl moiety of phosphoenolpyruvate (PEP) to the 5-hydroxyl of shikimate-3-phosphate (S3P) to produce enolpyruvyl shikimate-3-phosphate and inorganic phosphate. The sequence is that of 3-phosphoshikimate 1-carboxyvinyltransferase from Methanosarcina acetivorans (strain ATCC 35395 / DSM 2834 / JCM 12185 / C2A).